A 154-amino-acid chain; its full sequence is MEINKLQVEAIKSGSVIDHIPEYIGFKLLSLFRFTETEKRITIGLNLPSKKLGRKDIIKIENTFLSDEQINQLAIYAPHATVNYINEYNLVRKVFPTLPETIDRILICPNSNCVTNHHLINSSFILKEDQFFNMNLKCKYCEKEFYKKIVLSCQ.

4 residues coordinate Zn(2+): Cys-108, Cys-113, Cys-138, and Cys-141.

Belongs to the PyrI family. In terms of assembly, contains catalytic and regulatory chains. Zn(2+) serves as cofactor.

Functionally, involved in allosteric regulation of aspartate carbamoyltransferase. The polypeptide is Aspartate carbamoyltransferase regulatory chain (pyrI) (Buchnera aphidicola subsp. Acyrthosiphon pisum (strain APS) (Acyrthosiphon pisum symbiotic bacterium)).